The chain runs to 505 residues: Ribosomal RNA small subunit methyltransferase F (505 aa).

S-adenosyl-L-methionine-binding positions include 123–129 (ASAPGSK), glutamate 147, aspartate 174, and aspartate 192. Catalysis depends on cysteine 245, which acts as the Nucleophile. Residues 409-437 (GTNANNNSNTNPNNNANTNPNNNSNTNPR) are disordered. The segment covering 410–435 (TNANNNSNTNPNNNANTNPNNNSNTN) has biased composition (low complexity).

This sequence belongs to the class I-like SAM-binding methyltransferase superfamily. RsmB/NOP family.

It localises to the cytoplasm. It carries out the reaction cytidine(1407) in 16S rRNA + S-adenosyl-L-methionine = 5-methylcytidine(1407) in 16S rRNA + S-adenosyl-L-homocysteine + H(+). Specifically methylates the cytosine at position 1407 (m5C1407) of 16S rRNA. The polypeptide is Ribosomal RNA small subunit methyltransferase F (Shewanella denitrificans (strain OS217 / ATCC BAA-1090 / DSM 15013)).